The chain runs to 507 residues: Rho GTPase-activating protein 19 (507 aa).

Positions 112-305 constitute a Rho-GAP domain; the sequence is APLTEEGIAQ…FMIKHSQKLF (194 aa). Disordered stretches follow at residues 344–371, 400–419, and 483–507; these read FLKH…QQHT, KNTP…KKHV, and DLQI…ETSI. The segment covering 355 to 369 has biased composition (low complexity); sequence SSPSSSTSLQEQTQQ. Residues 400 to 413 show a composition bias toward polar residues; that stretch reads KNTPRTPVSDTQVP. A compositionally biased stretch (basic and acidic residues) spans 483–492; the sequence is DLQIRKEASS.

Functionally, GTPase activator for the Rho-type GTPases by converting them to an inactive GDP-bound state. The sequence is that of Rho GTPase-activating protein 19 (arhgap19) from Xenopus laevis (African clawed frog).